A 458-amino-acid chain; its full sequence is Light-independent protochlorophyllide reductase subunit N (458 aa).

Positions 22, 47, and 107 each coordinate [4Fe-4S] cluster.

This sequence belongs to the BchN/ChlN family. Protochlorophyllide reductase is composed of three subunits; ChlL, ChlN and ChlB. Forms a heterotetramer of two ChlB and two ChlN subunits. The cofactor is [4Fe-4S] cluster.

The protein resides in the plastid. The protein localises to the chloroplast. The catalysed reaction is chlorophyllide a + oxidized 2[4Fe-4S]-[ferredoxin] + 2 ADP + 2 phosphate = protochlorophyllide a + reduced 2[4Fe-4S]-[ferredoxin] + 2 ATP + 2 H2O. It participates in porphyrin-containing compound metabolism; chlorophyll biosynthesis (light-independent). Component of the dark-operative protochlorophyllide reductase (DPOR) that uses Mg-ATP and reduced ferredoxin to reduce ring D of protochlorophyllide (Pchlide) to form chlorophyllide a (Chlide). This reaction is light-independent. The NB-protein (ChlN-ChlB) is the catalytic component of the complex. In Chaetosphaeridium globosum (Charophycean green alga), this protein is Light-independent protochlorophyllide reductase subunit N.